The sequence spans 88 residues: Phosphocarrier protein HPr (88 aa).

The HPr domain maps to 1–88 (MAEKTFKVVS…DTLAKEGLAE (88 aa)). At S12 the chain carries Phosphoserine. H15 acts as the Pros-phosphohistidine intermediate in catalysis. Phosphoserine; by HPrK/P is present on S46.

The protein belongs to the HPr family.

Its subcellular location is the cytoplasm. Phosphorylation on Ser-46 inhibits the phosphoryl transfer from enzyme I to HPr. Functionally, general (non sugar-specific) component of the phosphoenolpyruvate-dependent sugar phosphotransferase system (sugar PTS). This major carbohydrate active-transport system catalyzes the phosphorylation of incoming sugar substrates concomitantly with their translocation across the cell membrane. The phosphoryl group from phosphoenolpyruvate (PEP) is transferred to the phosphoryl carrier protein HPr by enzyme I. Phospho-HPr then transfers it to the PTS EIIA domain. In terms of biological role, P-Ser-HPr interacts with the catabolite control protein A (CcpA), forming a complex that binds to DNA at the catabolite response elements cre, operator sites preceding a large number of catabolite-regulated genes. Thus, P-Ser-HPr is a corepressor in carbon catabolite repression (CCR), a mechanism that allows bacteria to coordinate and optimize the utilization of available carbon sources. P-Ser-HPr also plays a role in inducer exclusion, in which it probably interacts with several non-PTS permeases and inhibits their transport activity. The sequence is that of Phosphocarrier protein HPr (ptsH) from Geobacillus stearothermophilus (Bacillus stearothermophilus).